A 321-amino-acid polypeptide reads, in one-letter code: Ubiquitin-conjugating enzyme E2 U (321 aa).

Residues 4-153 (RAYLLLHRDF…LRLFNRPLQM (150 aa)) enclose the UBC core domain. Cys89 (glycyl thioester intermediate) is an active-site residue. The disordered stretch occupies residues 285 to 321 (WKSDTSLYENDTDEPREEEVEDLISWTNTLNTNTSED). The segment covering 294-306 (NDTDEPREEEVED) has biased composition (acidic residues). Polar residues predominate over residues 309 to 321 (SWTNTLNTNTSED).

The protein belongs to the ubiquitin-conjugating enzyme family. Autoubiquitinated in vitro in the presence of UBR5.

The catalysed reaction is S-ubiquitinyl-[E1 ubiquitin-activating enzyme]-L-cysteine + [E2 ubiquitin-conjugating enzyme]-L-cysteine = [E1 ubiquitin-activating enzyme]-L-cysteine + S-ubiquitinyl-[E2 ubiquitin-conjugating enzyme]-L-cysteine.. Its pathway is protein modification; protein ubiquitination. Functionally, catalyzes the covalent attachment of ubiquitin to other proteins. The sequence is that of Ubiquitin-conjugating enzyme E2 U (UBE2U) from Homo sapiens (Human).